A 196-amino-acid polypeptide reads, in one-letter code: Hibernation-associated plasma protein HP-20 (196 aa).

The signal sequence occupies residues 1-23 (MTDVWRLAIFVLMVNVLNDQVSC). The Collagen-like domain occupies 25-63 (GPPGPVGYPGVPGVPGPRGPPGQPGAAGRPGDPGPKGPS). Over residues 28-47 (GPVGYPGVPGVPGPRGPPGQ) the composition is skewed to pro residues. The segment at 28 to 64 (GPVGYPGVPGVPGPRGPPGQPGAAGRPGDPGPKGPSV) is disordered. In terms of domain architecture, C1q spans 67 to 196 (PCRERSAFTV…IYFSGFLISS (130 aa)).

As to expression, plasma; synthesized in the liver.

The protein localises to the secreted. Its function is as follows. Plasma proteins HP-20, HP-25, HP-27 and HP-55 form a 140 kDa complex via disulfide bonds in the plasma and are hibernation specific. The polypeptide is Hibernation-associated plasma protein HP-20 (Tamias sibiricus (Siberian chipmunk)).